A 396-amino-acid chain; its full sequence is Ribosomal RNA large subunit methyltransferase I (396 aa).

Residues 2–79 (AIRIKLKPGR…REEEIDREFF (78 aa)) form the PUA domain.

The protein belongs to the methyltransferase superfamily. RlmI family.

The protein resides in the cytoplasm. The catalysed reaction is cytidine(1962) in 23S rRNA + S-adenosyl-L-methionine = 5-methylcytidine(1962) in 23S rRNA + S-adenosyl-L-homocysteine + H(+). In terms of biological role, specifically methylates the cytosine at position 1962 (m5C1962) of 23S rRNA. The polypeptide is Ribosomal RNA large subunit methyltransferase I (Shewanella oneidensis (strain ATCC 700550 / JCM 31522 / CIP 106686 / LMG 19005 / NCIMB 14063 / MR-1)).